We begin with the raw amino-acid sequence, 73 residues long: DNA-directed RNA polymerase subunit Rpo10 (73 aa).

4 residues coordinate Zn(2+): Cys-7, Cys-10, Cys-44, and Cys-45.

Belongs to the archaeal Rpo10/eukaryotic RPB10 RNA polymerase subunit family. Part of the RNA polymerase complex. Forms an Rpo3-Rpo10-Rpo11-Rpo12 complex upon coexpression. Zn(2+) is required as a cofactor.

The protein resides in the cytoplasm. The enzyme catalyses RNA(n) + a ribonucleoside 5'-triphosphate = RNA(n+1) + diphosphate. Its function is as follows. DNA-dependent RNA polymerase (RNAP) catalyzes the transcription of DNA into RNA using the four ribonucleoside triphosphates as substrates. The chain is DNA-directed RNA polymerase subunit Rpo10 from Methanocaldococcus jannaschii (strain ATCC 43067 / DSM 2661 / JAL-1 / JCM 10045 / NBRC 100440) (Methanococcus jannaschii).